Reading from the N-terminus, the 180-residue chain is Cytidylate kinase 2 (180 aa).

Residue Gly7–Thr15 participates in ATP binding.

The protein belongs to the cytidylate kinase family. Type 2 subfamily.

Its subcellular location is the cytoplasm. The catalysed reaction is CMP + ATP = CDP + ADP. It carries out the reaction dCMP + ATP = dCDP + ADP. In Borreliella burgdorferi (strain ATCC 35210 / DSM 4680 / CIP 102532 / B31) (Borrelia burgdorferi), this protein is Cytidylate kinase 2 (cmk2).